Here is a 1563-residue protein sequence, read N- to C-terminus: Pentafunctional AROM polypeptide (1563 aa).

A 3-dehydroquinate synthase region spans residues 1–382 (MAEPISNPTR…YEPKASVVED (382 aa)). NAD(+) is bound by residues 48 to 50 (DTN), 82 to 85 (EYSK), 113 to 115 (GGV), and Asp-118. Arg-129 provides a ligand contact to 7-phospho-2-dehydro-3-deoxy-D-arabino-heptonate. 138–139 (TT) contributes to the NAD(+) binding site. Residues Asp-145 and Lys-151 each coordinate 7-phospho-2-dehydro-3-deoxy-D-arabino-heptonate. Lys-160 provides a ligand contact to NAD(+). Asn-161 provides a ligand contact to 7-phospho-2-dehydro-3-deoxy-D-arabino-heptonate. Residues 178–181 (FLNT) and Asn-189 contribute to the NAD(+) site. Glu-193 is a binding site for Zn(2+). 7-phospho-2-dehydro-3-deoxy-D-arabino-heptonate is bound by residues 193-196 (EVIK) and Lys-248. The active-site Proton acceptor; for 3-dehydroquinate synthase activity is Glu-258. 7-phospho-2-dehydro-3-deoxy-D-arabino-heptonate-binding positions include 262–266 (RNLLN) and His-269. His-269 provides a ligand contact to Zn(2+). Catalysis depends on His-273, which acts as the Proton acceptor; for 3-dehydroquinate synthase activity. Positions 285 and 354 each coordinate 7-phospho-2-dehydro-3-deoxy-D-arabino-heptonate. Zn(2+) is bound at residue His-285. The segment at 395–834 (VFAGVPKDLN…WDTMSNYFKV (440 aa)) is EPSP synthase. The For EPSP synthase activity role is filled by Cys-816. The tract at residues 857–1051 (PKSIFIIGMR…KKKPHSFFVS (195 aa)) is shikimate kinase. 864 to 871 (GMRGAGKS) provides a ligand contact to ATP. Residues 1052–1265 (LTVPNVSKAL…AAPGQLSAAE (214 aa)) are 3-dehydroquinase. His-1168 acts as the Proton acceptor; for 3-dehydroquinate dehydratase activity in catalysis. Lys-1196 serves as the catalytic Schiff-base intermediate with substrate; for 3-dehydroquinate dehydratase activity. The interval 1278-1563 (PRSFHLFGNP…TDAQAAVMGN (286 aa)) is shikimate dehydrogenase.

In the N-terminal section; belongs to the sugar phosphate cyclases superfamily. Dehydroquinate synthase family. The protein in the 2nd section; belongs to the EPSP synthase family. This sequence in the 3rd section; belongs to the shikimate kinase family. It in the 4th section; belongs to the type-I 3-dehydroquinase family. In the C-terminal section; belongs to the shikimate dehydrogenase family. In terms of assembly, homodimer. Requires Zn(2+) as cofactor.

It is found in the cytoplasm. It carries out the reaction 7-phospho-2-dehydro-3-deoxy-D-arabino-heptonate = 3-dehydroquinate + phosphate. It catalyses the reaction 3-dehydroquinate = 3-dehydroshikimate + H2O. The enzyme catalyses shikimate + NADP(+) = 3-dehydroshikimate + NADPH + H(+). The catalysed reaction is shikimate + ATP = 3-phosphoshikimate + ADP + H(+). It carries out the reaction 3-phosphoshikimate + phosphoenolpyruvate = 5-O-(1-carboxyvinyl)-3-phosphoshikimate + phosphate. It functions in the pathway metabolic intermediate biosynthesis; chorismate biosynthesis; chorismate from D-erythrose 4-phosphate and phosphoenolpyruvate: step 2/7. It participates in metabolic intermediate biosynthesis; chorismate biosynthesis; chorismate from D-erythrose 4-phosphate and phosphoenolpyruvate: step 3/7. The protein operates within metabolic intermediate biosynthesis; chorismate biosynthesis; chorismate from D-erythrose 4-phosphate and phosphoenolpyruvate: step 4/7. Its pathway is metabolic intermediate biosynthesis; chorismate biosynthesis; chorismate from D-erythrose 4-phosphate and phosphoenolpyruvate: step 5/7. It functions in the pathway metabolic intermediate biosynthesis; chorismate biosynthesis; chorismate from D-erythrose 4-phosphate and phosphoenolpyruvate: step 6/7. Functionally, the AROM polypeptide catalyzes 5 consecutive enzymatic reactions in prechorismate polyaromatic amino acid biosynthesis. The chain is Pentafunctional AROM polypeptide from Neurospora crassa (strain ATCC 24698 / 74-OR23-1A / CBS 708.71 / DSM 1257 / FGSC 987).